The sequence spans 448 residues: tRNA-2-methylthio-N(6)-dimethylallyladenosine synthase (448 aa).

Positions 3–118 (KKVFIKTFGC…LPELLNARAA (116 aa)) constitute an MTTase N-terminal domain. [4Fe-4S] cluster-binding residues include Cys12, Cys49, Cys81, Cys155, Cys159, and Cys162. Residues 141–374 (RVEGASAFVS…QAVINRNILE (234 aa)) enclose the Radical SAM core domain. Residues 377–440 (QERVGTVQRL…TYTLRGEVVM (64 aa)) form the TRAM domain.

The protein belongs to the methylthiotransferase family. MiaB subfamily. In terms of assembly, monomer. Requires [4Fe-4S] cluster as cofactor.

The protein resides in the cytoplasm. The catalysed reaction is N(6)-dimethylallyladenosine(37) in tRNA + (sulfur carrier)-SH + AH2 + 2 S-adenosyl-L-methionine = 2-methylsulfanyl-N(6)-dimethylallyladenosine(37) in tRNA + (sulfur carrier)-H + 5'-deoxyadenosine + L-methionine + A + S-adenosyl-L-homocysteine + 2 H(+). Functionally, catalyzes the methylthiolation of N6-(dimethylallyl)adenosine (i(6)A), leading to the formation of 2-methylthio-N6-(dimethylallyl)adenosine (ms(2)i(6)A) at position 37 in tRNAs that read codons beginning with uridine. This is tRNA-2-methylthio-N(6)-dimethylallyladenosine synthase from Acidovorax sp. (strain JS42).